Here is a 699-residue protein sequence, read N- to C-terminus: Elongation factor G (699 aa).

The 276-residue stretch at 8–283 (EHIRNIGICA…AVVDFLPSPI (276 aa)) folds into the tr-type G domain. Residues 17–24 (AHIDAGKT), 81–85 (DTPGH), and 135–138 (NKMD) each bind GTP.

It belongs to the TRAFAC class translation factor GTPase superfamily. Classic translation factor GTPase family. EF-G/EF-2 subfamily.

It is found in the cytoplasm. Functionally, catalyzes the GTP-dependent ribosomal translocation step during translation elongation. During this step, the ribosome changes from the pre-translocational (PRE) to the post-translocational (POST) state as the newly formed A-site-bound peptidyl-tRNA and P-site-bound deacylated tRNA move to the P and E sites, respectively. Catalyzes the coordinated movement of the two tRNA molecules, the mRNA and conformational changes in the ribosome. This Rickettsia conorii (strain ATCC VR-613 / Malish 7) protein is Elongation factor G.